The sequence spans 130 residues: uncharacterized protein (130 aa).

An N-terminal signal peptide occupies residues 1-26; that stretch reads MKFIYKLLFILSIVLFLFNNIITING. Asn-88 is a glycosylation site (N-linked (GlcNAc...) asparagine).

The protein localises to the secreted. This is an uncharacterized protein from Dictyostelium discoideum (Social amoeba).